Consider the following 103-residue polypeptide: Large ribosomal subunit protein bL21 (103 aa).

This sequence belongs to the bacterial ribosomal protein bL21 family. Part of the 50S ribosomal subunit. Contacts protein L20.

Its function is as follows. This protein binds to 23S rRNA in the presence of protein L20. This chain is Large ribosomal subunit protein bL21, found in Idiomarina loihiensis (strain ATCC BAA-735 / DSM 15497 / L2-TR).